The primary structure comprises 364 residues: Aminomethyltransferase (364 aa).

This sequence belongs to the GcvT family. The glycine cleavage system is composed of four proteins: P, T, L and H.

It catalyses the reaction N(6)-[(R)-S(8)-aminomethyldihydrolipoyl]-L-lysyl-[protein] + (6S)-5,6,7,8-tetrahydrofolate = N(6)-[(R)-dihydrolipoyl]-L-lysyl-[protein] + (6R)-5,10-methylene-5,6,7,8-tetrahydrofolate + NH4(+). Functionally, the glycine cleavage system catalyzes the degradation of glycine. This is Aminomethyltransferase from Shewanella halifaxensis (strain HAW-EB4).